Consider the following 54-residue polypeptide: Ovomucoid (54 aa).

Residues 4–54 enclose the Kazal-like domain; that stretch reads VDCSGYPTHACTLELKPLCGSDNQTYSNKCGFCNAVAQSNGTLTLSHFGKC. Cystine bridges form between Cys-6/Cys-36, Cys-14/Cys-33, and Cys-22/Cys-54. N-linked (GlcNAc...) asparagine glycosylation occurs at Asn-43.

It localises to the secreted. The sequence is that of Ovomucoid from Leipoa ocellata (Malleefowl).